A 607-amino-acid polypeptide reads, in one-letter code: Chaperone protein dnaK (607 aa).

The segment covering 579-591 has biased composition (polar residues); sequence KASETSNAKTNGK. Residues 579-607 form a disordered region; sequence KASETSNAKTNGKASEKEDVIDADFKAQE. The span at 592-607 shows a compositional bias: basic and acidic residues; sequence ASEKEDVIDADFKAQE.

This sequence belongs to the heat shock protein 70 family.

It localises to the plastid. The protein resides in the chloroplast. Acts as a chaperone. The polypeptide is Chaperone protein dnaK (Cyanidioschyzon merolae (strain NIES-3377 / 10D) (Unicellular red alga)).